The primary structure comprises 171 residues: NADP-reducing hydrogenase subunit HndA (171 aa).

The [2Fe-2S] cluster site is built by Cys-98, Cys-103, Cys-139, and Cys-143.

The protein belongs to the complex I 24 kDa subunit family. Heterotetramer composed of HndA, HndB, HndC and HndD subunits. HndA and HndB could form a heterodimeric intermediate in the electron transfer between the active site of hydrogenase subunit HndD and the NADP reduction site of the reducing subunit HndC. It depends on [2Fe-2S] cluster as a cofactor.

It catalyses the reaction H2 + NADP(+) = NADPH + H(+). Its activity is regulated as follows. Inhibited by oxygen. Catalyzes the reduction of NADP in the presence of molecular H(2) to yield NADPH. This Solidesulfovibrio fructosivorans (Desulfovibrio fructosivorans) protein is NADP-reducing hydrogenase subunit HndA (hndA).